Consider the following 241-residue polypeptide: MTAPQNGTGNGLQTGADLAVRSDSPLILALPKGRILKALAPVLTRTGIEPDPDCLTESSRRLRFGTSDPNLDVVRVRSFDVATFVAYGGADIGVCGADVLMEFDYPDIYAPLDLGIGGCRISVARPKTMVEDPATGQSRLCVATKYPTIARRHFASRAINAEIVHLNGAMELAPTLDLASVIVDLVDTGSTLRANGLMETETIAHVTSRLIVNRVALKTRPEEISALIERFRAALNTEEAA.

Belongs to the ATP phosphoribosyltransferase family. Short subfamily. In terms of assembly, heteromultimer composed of HisG and HisZ subunits.

The protein resides in the cytoplasm. The catalysed reaction is 1-(5-phospho-beta-D-ribosyl)-ATP + diphosphate = 5-phospho-alpha-D-ribose 1-diphosphate + ATP. It participates in amino-acid biosynthesis; L-histidine biosynthesis; L-histidine from 5-phospho-alpha-D-ribose 1-diphosphate: step 1/9. In terms of biological role, catalyzes the condensation of ATP and 5-phosphoribose 1-diphosphate to form N'-(5'-phosphoribosyl)-ATP (PR-ATP). Has a crucial role in the pathway because the rate of histidine biosynthesis seems to be controlled primarily by regulation of HisG enzymatic activity. The polypeptide is ATP phosphoribosyltransferase (Gluconobacter oxydans (strain 621H) (Gluconobacter suboxydans)).